The sequence spans 33 residues: Protamine-2C (33 aa).

Residues 1-33 (MPRRRRSSRRPVRRRRRPRVSRRRRRRGGRRRR) are disordered.

As to expression, testis.

The protein resides in the nucleus. It is found in the chromosome. Its function is as follows. Protamines substitute for histones in the chromatin of sperm during the haploid phase of spermatogenesis. They compact sperm DNA into a highly condensed, stable and inactive complex. This is Protamine-2C from Oncorhynchus mykiss (Rainbow trout).